Consider the following 167-residue polypeptide: Lipoprotein signal peptidase (167 aa).

Transmembrane regions (helical) follow at residues 5–25 (ICSTGLRWLWLVVVVLILDLG), 42–62 (LIPYFNLTYAQNFGAAFSFLA), 70–90 (WFFAFIAVAISVVLMVMMYRA), and 102–122 (ALIIGGALGNLFDRLVHGFVI). Residues Asp123 and Asp141 contribute to the active site. A helical membrane pass occupies residues 137–157 (FNIADMAICIGAGLVIIDSFL).

The protein belongs to the peptidase A8 family.

The protein localises to the cell inner membrane. The enzyme catalyses Release of signal peptides from bacterial membrane prolipoproteins. Hydrolyzes -Xaa-Yaa-Zaa-|-(S,diacylglyceryl)Cys-, in which Xaa is hydrophobic (preferably Leu), and Yaa (Ala or Ser) and Zaa (Gly or Ala) have small, neutral side chains.. Its pathway is protein modification; lipoprotein biosynthesis (signal peptide cleavage). Functionally, this protein specifically catalyzes the removal of signal peptides from prolipoproteins. This chain is Lipoprotein signal peptidase, found in Photorhabdus laumondii subsp. laumondii (strain DSM 15139 / CIP 105565 / TT01) (Photorhabdus luminescens subsp. laumondii).